The chain runs to 368 residues: Glutamate 5-kinase (368 aa).

Residue K18 coordinates ATP. Residues S58, D145, and N157 each contribute to the substrate site. ATP is bound by residues 177–178 (SD) and 218–224 (TGGMASK). In terms of domain architecture, PUA spans 280–358 (AGSLTLDEGA…SELPGELRRP (79 aa)).

It belongs to the glutamate 5-kinase family.

Its subcellular location is the cytoplasm. The enzyme catalyses L-glutamate + ATP = L-glutamyl 5-phosphate + ADP. It participates in amino-acid biosynthesis; L-proline biosynthesis; L-glutamate 5-semialdehyde from L-glutamate: step 1/2. In terms of biological role, catalyzes the transfer of a phosphate group to glutamate to form L-glutamate 5-phosphate. The protein is Glutamate 5-kinase of Mycobacterium ulcerans (strain Agy99).